Consider the following 69-residue polypeptide: Sodium channel toxin (69 aa).

An LCN-type CS-alpha/beta domain is found at 2 to 66 (KNDYPVDTAK…SPTKTSGRCN (65 aa)). 4 disulfides stabilise this stretch: Cys14–Cys65, Cys18–Cys41, Cys27–Cys48, and Cys31–Cys50.

Belongs to the long (4 C-C) scorpion toxin superfamily. Sodium channel inhibitor family. As to expression, expressed by the venom gland.

The protein resides in the secreted. Its function is as follows. Inhibits voltage-gated sodium channels (Nav). This is Sodium channel toxin from Tityus metuendus (Scorpion).